We begin with the raw amino-acid sequence, 428 residues long: ETS domain-containing protein Elk-1 (428 aa).

The ETS DNA-binding region spans 5-86 (VTLWQFLLQL…SGQKFVYKFV (82 aa)). 3 disordered regions span residues 121-149 (AAPG…ARSS), 165-205 (QSLQ…SPLE), and 228-358 (NLKS…SLLP). Residues 177-205 (PAVVLPSAAPAGAAAPPSGSRSTSPSPLE) are compositionally biased toward low complexity. Glycyl lysine isopeptide (Lys-Gly) (interchain with G-Cter in SUMO) cross-links involve residues Lys-230, Lys-249, and Lys-254. The span at 248–261 (VKVEGPKEELEVAG) shows a compositional bias: basic and acidic residues. At Ser-324 the chain carries Phosphoserine; by MAPK1. 4 positions are modified to phosphothreonine; by MAPK1: Thr-336, Thr-353, Thr-363, and Thr-368. The segment at 349-399 (GPALTPSLLPTHTLTPVLLTPSSLPPSIHFWSTLSPIAPRSPAKLSFQFPS) is sufficient for interaction with MAD2L2. Residue Thr-381 is glycosylated (O-linked (GlcNAc) threonine). At Ser-383 the chain carries Phosphoserine; by MAPK1 and MAPK8. Ser-389 bears the Phosphoserine; by MAPK1 mark. Thr-417 is subject to Phosphothreonine; by MAPK1. A Phosphoserine; by MAPK1 modification is found at Ser-422.

The protein belongs to the ETS family. In terms of assembly, interacts in its sumoylated form with PIAS2/PIASX which enhances its transcriptional activator activity. Interacts with MAD2L2; the interaction is direct and promotes phosphorylation by the kinases MAPK8 and/or MAPK9. Interacts with POU1F1. Sumoylation represses transcriptional activator activity as it results in recruitment of HDAC2 to target gene promoters which leads to decreased histone acetylation and reduced transactivator activity. It also regulates nuclear retention. Post-translationally, on mitogenic stimulation, phosphorylated on C-terminal serine and threonine residues by MAPK1. Ser-383 and Ser-389 are the preferred sites for MAPK1. In vitro, phosphorylation by MAPK1 potentiates ternary complex formation with the serum responses factors, SRE and SRF. Also phosphorylated on Ser-383 by MAPK8 and/or MAKP9. Phosphorylation leads to loss of sumoylation and restores transcriptional activator activity. Phosphorylated and activated by CAMK4, MAPK11, MAPK12 and MAPK14. Upon bFGF stimulus, phosphorylated by PAK1. Phosphorylated by PRP4K at Thr-417; phosphorylation activation ELK1 transcriptional activity. In terms of tissue distribution, lung and testis.

It is found in the nucleus. In terms of biological role, transcription factor that binds to purine-rich DNA sequences. Forms a ternary complex with SRF and the ETS and SRF motifs of the serum response element (SRE) on the promoter region of immediate early genes such as FOS and IER2. Induces target gene transcription upon JNK and MAPK-signaling pathways stimulation. In Homo sapiens (Human), this protein is ETS domain-containing protein Elk-1.